The chain runs to 185 residues: Sarcoplasmic calcium-binding proteins II, V, VI, and VII (185 aa).

4 EF-hand domains span residues 5-41 (FQKQ…YKEV), 57-92 (SLED…TIAT), 102-137 (WCQN…FQLQ), and 138-173 (CADV…TSPA). Positions 19, 21, 23, 25, 30, 70, 72, 74, 81, 115, 117, 119, and 126 each coordinate Ca(2+).

Like parvalbumins, SCPs seem to be more abundant in fast contracting muscles, but no functional relationship can be established from this distribution. The polypeptide is Sarcoplasmic calcium-binding proteins II, V, VI, and VII (Branchiostoma lanceolatum (Common lancelet)).